The sequence spans 149 residues: Transcriptional repressor NrdR (149 aa).

A zinc finger spans residues 3–34; that stretch reads CPFCGNLETQVVETRVSEDADFIRRRRQCGAC. In terms of domain architecture, ATP-cone spans 49–139; that stretch reads PAIVKKDGRR…VYRSFEDIDE (91 aa).

The protein belongs to the NrdR family. The cofactor is Zn(2+).

In terms of biological role, negatively regulates transcription of bacterial ribonucleotide reductase nrd genes and operons by binding to NrdR-boxes. In Polaromonas sp. (strain JS666 / ATCC BAA-500), this protein is Transcriptional repressor NrdR.